The sequence spans 418 residues: Gamma-glutamyl phosphate reductase (418 aa).

The protein belongs to the gamma-glutamyl phosphate reductase family.

It is found in the cytoplasm. The catalysed reaction is L-glutamate 5-semialdehyde + phosphate + NADP(+) = L-glutamyl 5-phosphate + NADPH + H(+). It participates in amino-acid biosynthesis; L-proline biosynthesis; L-glutamate 5-semialdehyde from L-glutamate: step 2/2. Catalyzes the NADPH-dependent reduction of L-glutamate 5-phosphate into L-glutamate 5-semialdehyde and phosphate. The product spontaneously undergoes cyclization to form 1-pyrroline-5-carboxylate. The protein is Gamma-glutamyl phosphate reductase of Desulforapulum autotrophicum (strain ATCC 43914 / DSM 3382 / VKM B-1955 / HRM2) (Desulfobacterium autotrophicum).